Here is a 142-residue protein sequence, read N- to C-terminus: Profilin (142 aa).

The protein belongs to the profilin family. Occurs in many kinds of cells as a complex with monomeric actin in a 1:1 ratio. Expressed specifically in coelomocytes in response to injury.

It is found in the cytoplasm. It localises to the cytoskeleton. Functionally, binds to actin and affects the structure of the cytoskeleton. At high concentrations, profilin prevents the polymerization of actin, whereas it enhances it at low concentrations. By binding to PIP2, it inhibits the formation of IP3 and DG. The protein is Profilin of Strongylocentrotus purpuratus (Purple sea urchin).